The following is a 202-amino-acid chain: MKKSVWHHSLKGYCGRIAAVLCFSVLVPLVAMAAEGGGHGEEGTDWVNFGWRVLDFIILVGLFYWLLASKVKSFFSGRREEIKTTLEEARLAKEAAEHKFKEYSEKLDKASKEIEGVYEMIRAQGQAEKEKILEDARKAAAKMKEDTQARIEQELKKASQQLRMEAVQLSVHVAEDILKRNITPEDHQSMVKDYLDKVVRKH.

Residues 17–37 traverse the membrane as a helical segment; sequence IAAVLCFSVLVPLVAMAAEGG.

It belongs to the ATPase B chain family. As to quaternary structure, F-type ATPases have 2 components, F(1) - the catalytic core - and F(0) - the membrane proton channel. F(1) has five subunits: alpha(3), beta(3), gamma(1), delta(1), epsilon(1). F(0) has three main subunits: a(1), b(2) and c(10-14). The alpha and beta chains form an alternating ring which encloses part of the gamma chain. F(1) is attached to F(0) by a central stalk formed by the gamma and epsilon chains, while a peripheral stalk is formed by the delta and b chains.

Its subcellular location is the cell inner membrane. In terms of biological role, f(1)F(0) ATP synthase produces ATP from ADP in the presence of a proton or sodium gradient. F-type ATPases consist of two structural domains, F(1) containing the extramembraneous catalytic core and F(0) containing the membrane proton channel, linked together by a central stalk and a peripheral stalk. During catalysis, ATP synthesis in the catalytic domain of F(1) is coupled via a rotary mechanism of the central stalk subunits to proton translocation. Component of the F(0) channel, it forms part of the peripheral stalk, linking F(1) to F(0). In Syntrophus aciditrophicus (strain SB), this protein is ATP synthase subunit b 1.